The primary structure comprises 609 residues: Proteasome-associated ATPase (609 aa).

Positions 1–24 (MADSERSEAFGTPDDTPLSSNDAA) are disordered. Residues 19 to 96 (SSNDAAELEQ…LREEVDRLGQ (78 aa)) adopt a coiled-coil conformation. An ATP-binding site is contributed by 296–301 (GCGKTL). Residues 608–609 (YL) are docks into pockets in the proteasome alpha-ring.

Belongs to the AAA ATPase family. Homohexamer. Assembles into a hexameric ring structure that caps the 20S proteasome core. Strongly interacts with the prokaryotic ubiquitin-like protein Pup through a hydrophobic interface; the interacting region of ARC lies in its N-terminal coiled-coil domain. There is one Pup binding site per ARC hexamer ring. Upon ATP-binding, the C-terminus of ARC interacts with the alpha-rings of the proteasome core, possibly by binding to the intersubunit pockets.

It participates in protein degradation; proteasomal Pup-dependent pathway. ATPase which is responsible for recognizing, binding, unfolding and translocation of pupylated proteins into the bacterial 20S proteasome core particle. May be essential for opening the gate of the 20S proteasome via an interaction with its C-terminus, thereby allowing substrate entry and access to the site of proteolysis. Thus, the C-termini of the proteasomal ATPase may function like a 'key in a lock' to induce gate opening and therefore regulate proteolysis. The sequence is that of Proteasome-associated ATPase from Mycobacterium ulcerans (strain Agy99).